Reading from the N-terminus, the 83-residue chain is Exodeoxyribonuclease 7 small subunit (83 aa).

This sequence belongs to the XseB family. In terms of assembly, heterooligomer composed of large and small subunits.

It localises to the cytoplasm. The enzyme catalyses Exonucleolytic cleavage in either 5'- to 3'- or 3'- to 5'-direction to yield nucleoside 5'-phosphates.. Its function is as follows. Bidirectionally degrades single-stranded DNA into large acid-insoluble oligonucleotides, which are then degraded further into small acid-soluble oligonucleotides. This chain is Exodeoxyribonuclease 7 small subunit, found in Nitrobacter hamburgensis (strain DSM 10229 / NCIMB 13809 / X14).